We begin with the raw amino-acid sequence, 123 residues long: Small ribosomal subunit protein uS12c (123 aa).

Residues 103 to 123 (AAGVKNRKQSRSKYGAKKPKE) form a disordered region. The segment covering 107-123 (KNRKQSRSKYGAKKPKE) has biased composition (basic residues).

This sequence belongs to the universal ribosomal protein uS12 family. Part of the 30S ribosomal subunit.

The protein localises to the plastid. The protein resides in the chloroplast. Functionally, with S4 and S5 plays an important role in translational accuracy. Located at the interface of the 30S and 50S subunits. In Guillardia theta (Cryptophyte), this protein is Small ribosomal subunit protein uS12c (rps12).